A 445-amino-acid chain; its full sequence is MSDIYYQLPVEIWLQIIFFSDNINLLFVDKNFFGLIKLINDKKPIIKKIINQNYFDVLRYAIKNCIGIFGDNFMEDCLRQSFYDGQLYIADYLVDKGADIYSMGNLYFITTNETENHNNFRYVDGLNVLQGKFNKKTGFYVHKPETICQYLNHNIYLRDVYLPKGKTGFKKFKLENYYVANMIVLGKQRNLIDLDTWKYMIYHGTIITEGVIEYCRINKCTKIVDYLLDCLIETNHNIDIYTACKNGYTKLAIHYIKNSIICREIRYYIMSRGTYWTDNKSENINHEHIANLATQNGHIEILKYLVEEKYELVGNLYIIMFLACQYGHLEIIKYLVELGVDIRQGLDAFIYLLWQGSYFNILKYLLTVDSDIINIINKVDYNGWFKMYLKDPLSIDSNHYIHPYTISELKCRINSPICKPIYYLRNKSIGTIDFDDFNDIDGFND.

4 ANK repeats span residues 73–102, 285–314, 315–344, and 346–375; these read FMED…DIYS, NHEH…ELVG, NLYI…DIRQ, and LDAF…IINI.

The sequence is that of Putative ankyrin repeat protein L797 from Acanthamoeba polyphaga (Amoeba).